The sequence spans 244 residues: tRNA (guanine-N(1)-)-methyltransferase (244 aa).

S-adenosyl-L-methionine is bound by residues Gly112 and 131-136 (IGDFIV).

Belongs to the RNA methyltransferase TrmD family. In terms of assembly, homodimer.

Its subcellular location is the cytoplasm. It catalyses the reaction guanosine(37) in tRNA + S-adenosyl-L-methionine = N(1)-methylguanosine(37) in tRNA + S-adenosyl-L-homocysteine + H(+). Functionally, specifically methylates guanosine-37 in various tRNAs. The protein is tRNA (guanine-N(1)-)-methyltransferase of Clostridium kluyveri (strain NBRC 12016).